The chain runs to 1188 residues: Spermatogenesis-associated protein 31C1 (1188 aa).

Residues 23-43 (PWVLDIFLTLVFALGLFFLLL) form a helical membrane-spanning segment. 8 disordered regions span residues 57–92 (PSPR…KNHS), 121–249 (LEKG…LLTP), 483–510 (PGTS…EAQT), 530–567 (TPQN…DSGS), 733–813 (MPER…PTVP), 934–1013 (NMGH…PSIS), 1121–1143 (QQAT…QQPL), and 1155–1188 (LRHP…HHHH). Basic residues-rich tracts occupy residues 59–68 (PRKRKRHLVS) and 80–92 (RRGR…KNHS). The span at 138 to 154 (VGKRTPDGASRSSHEPM) shows a compositional bias: basic and acidic residues. Residues 191–207 (SSLSASQPPEPSLLLER) are compositionally biased toward low complexity. Pro residues predominate over residues 210–241 (PEPPALFPHPPHTPDPLACSPPPPKGFTPPPL). The segment covering 495–510 (WQSSTSTGESSKEAQT) has biased composition (polar residues). Polar residues-rich tracts occupy residues 783–800 (LKGS…SSRA) and 943–954 (PNCQGSCKSQSP). The segment covering 960–976 (HKRENSRKPNLEKHEEM) has biased composition (basic and acidic residues). The segment covering 1121-1130 (QQATLKNQSR) has biased composition (polar residues).

Belongs to the SPATA31 family.

It is found in the membrane. May play a role in spermatogenesis. The protein is Spermatogenesis-associated protein 31C1 (SPATA31C1) of Homo sapiens (Human).